The chain runs to 152 residues: Large-conductance mechanosensitive channel (152 aa).

2 consecutive transmembrane segments (helical) span residues 14–34 (VIDLAVGVVIGAAFGSIVKSL) and 84–104 (VGQFINSVVSFVLIAFSVFLL).

Belongs to the MscL family. Homopentamer.

Its subcellular location is the cell inner membrane. In terms of biological role, channel that opens in response to stretch forces in the membrane lipid bilayer. May participate in the regulation of osmotic pressure changes within the cell. In Laribacter hongkongensis (strain HLHK9), this protein is Large-conductance mechanosensitive channel.